Consider the following 256-residue polypeptide: Catechol O-methyltransferase A (256 aa).

The N-terminal stretch at 1–27 is a signal peptide; the sequence is MLWVVLAVVVVLASVLVLLRQSSGLLA. Residue Asn58 is glycosylated (N-linked (GlcNAc...) asparagine). The S-adenosyl-L-methionine site is built by Val84, Ser114, Glu132, and Asp183. Asp183 serves as a coordination point for Mg(2+). Lys186 serves as a coordination point for substrate. Positions 211 and 212 each coordinate Mg(2+). Residues Asn212 and Glu241 each coordinate substrate.

This sequence belongs to the class I-like SAM-binding methyltransferase superfamily. Cation-dependent O-methyltransferase family. The cofactor is Mg(2+). As to expression, widely expressed. Has higher expression in females compared to males. Strongly expressed in liver and diencephalon. Expressed at lower levels in hindbrain, spinal cord, eye, telencephalon, spleen, gut, gill and muscle. Detected in ovary and testis. In eye, detected in all layers of the retina with highest expression in the inner nuclear layer. In gut, expressed in the lamina propria but has little or no expression in gut epithelium. In brain, has strongest expression near the midline of the telencephalon, in the periventricular gray zone of the optic tectum, in the preglomerular nucleus, and near the walls of the diencephalic ventricle.

The protein resides in the secreted. It catalyses the reaction a catechol + S-adenosyl-L-methionine = a guaiacol + S-adenosyl-L-homocysteine + H(+). Its function is as follows. Catalyzes the O-methylation, and thereby the inactivation, of catecholamine neurotransmitters and catechol hormones. Shows highest activity towards catecholestrogens and dobutamine. Also has lower activity towards L-DOPA, dopamine and epinephrine. Active towards the xenobiotic compounds methyl-DOPA, carbidopa, isoproterenol, and apomorphine. The polypeptide is Catechol O-methyltransferase A (Danio rerio (Zebrafish)).